The chain runs to 550 residues: Spermatogenesis-associated protein 2 (550 aa).

One can recognise a PUB domain in the interval 83–156; it reads TVGTAFATLE…YNVRDHPGGA (74 aa). The PIM motif signature appears at 320–337; that stretch reads YHLSSLDEVDLYTERGLG. The disordered stretch occupies residues 457-480; sequence SKPVGSGPSPVGSLVSSGSSSSGG.

This sequence belongs to the SPATA2 family.

The protein resides in the cytoplasm. Its subcellular location is the nucleus. Its function is as follows. Bridging factor that mediates the recruitment of cyld to the LUBAC complex, thereby regulating TNF-alpha-induced necroptosis. Required to activate the 'Met-1'- (linear) and 'Lys-63'-linked deubiquitinase activities of cyld. The sequence is that of Spermatogenesis-associated protein 2 from Danio rerio (Zebrafish).